The primary structure comprises 177 residues: ATP synthase subunit delta, chloroplastic (177 aa).

This sequence belongs to the ATPase delta chain family. F-type ATPases have 2 components, F(1) - the catalytic core - and F(0) - the membrane proton channel. F(1) has five subunits: alpha(3), beta(3), gamma(1), delta(1), epsilon(1). CF(0) has four main subunits: a(1), b(1), b'(1) and c(10-14). The alpha and beta chains form an alternating ring which encloses part of the gamma chain. F(1) is attached to F(0) by a central stalk formed by the gamma and epsilon chains, while a peripheral stalk is formed by the delta, b and b' chains.

The protein localises to the plastid. Its subcellular location is the chloroplast thylakoid membrane. F(1)F(0) ATP synthase produces ATP from ADP in the presence of a proton or sodium gradient. F-type ATPases consist of two structural domains, F(1) containing the extramembraneous catalytic core and F(0) containing the membrane proton channel, linked together by a central stalk and a peripheral stalk. During catalysis, ATP synthesis in the catalytic domain of F(1) is coupled via a rotary mechanism of the central stalk subunits to proton translocation. Functionally, this protein is part of the stalk that links CF(0) to CF(1). It either transmits conformational changes from CF(0) to CF(1) or is implicated in proton conduction. The sequence is that of ATP synthase subunit delta, chloroplastic from Galdieria sulphuraria (Red alga).